The chain runs to 1032 residues: Putative oxidoreductase YgfK (1032 aa).

Residues 928-958 (RFQTLHLDAYCNECGNCAQFCPWNGKPYKDK) enclose the 4Fe-4S ferredoxin-type domain. C938, C941, C944, and C948 together coordinate [4Fe-4S] cluster.

Requires [4Fe-4S] cluster as cofactor.

Could be an iron-sulfur flavoprotein with NADPH:O(2) oxidoreductase activity. The protein is Putative oxidoreductase YgfK (ygfK) of Escherichia coli (strain K12).